A 101-amino-acid chain; its full sequence is MRPYELMVIIDPEVEERTVEPSLQKFLNVITNDGGTIEKVDIWGRRRLAYEIKKKSEGIYAVVNFTAKPDTAKELDRQLSLNETIMRTKITRPEEQKVVAE.

The protein belongs to the bacterial ribosomal protein bS6 family.

Binds together with bS18 to 16S ribosomal RNA. The polypeptide is Small ribosomal subunit protein bS6 (Arthrobacter sp. (strain FB24)).